The primary structure comprises 271 residues: Putative phosphoenolpyruvate synthase regulatory protein (271 aa).

151–158 (GVSRSGKT) is an ADP binding site.

This sequence belongs to the pyruvate, phosphate/water dikinase regulatory protein family. PSRP subfamily.

The enzyme catalyses [pyruvate, water dikinase] + ADP = [pyruvate, water dikinase]-phosphate + AMP + H(+). It carries out the reaction [pyruvate, water dikinase]-phosphate + phosphate + H(+) = [pyruvate, water dikinase] + diphosphate. Functionally, bifunctional serine/threonine kinase and phosphorylase involved in the regulation of the phosphoenolpyruvate synthase (PEPS) by catalyzing its phosphorylation/dephosphorylation. The chain is Putative phosphoenolpyruvate synthase regulatory protein from Paraburkholderia xenovorans (strain LB400).